The following is a 282-amino-acid chain: MTFEPTETLRDPFVLYGESFASRLLLGTARYPSPATLQAAVEASRPAMITVALRRQTAVGSGDGQTLGGETFWQMLRTLGVPVLPNTAGCFTAQEVITTAMMAREVFETDWIKLELIGDDYTLQPDTLNMPAVAETLVKEGFKVLPYCTEDLVLCRRLLDVGCQALMPWAAPIGTGRGAVNPHAMRTLRDRLPDTPLIVDAGLGLPSHAAQVLEWGYDGVLLNTAVAQSAYPVNMARAFALAVEAGRTAYLAGPMPEREVAQASTPVVGMPFWHAEGAEDRA.

Residue Lys113 is the Schiff-base intermediate with DXP of the active site. 1-deoxy-D-xylulose 5-phosphate-binding positions include Gly174, 201–202 (AG), and 223–224 (NT).

It belongs to the ThiG family. In terms of assembly, homotetramer. Forms heterodimers with either ThiH or ThiS.

Its subcellular location is the cytoplasm. It carries out the reaction [ThiS sulfur-carrier protein]-C-terminal-Gly-aminoethanethioate + 2-iminoacetate + 1-deoxy-D-xylulose 5-phosphate = [ThiS sulfur-carrier protein]-C-terminal Gly-Gly + 2-[(2R,5Z)-2-carboxy-4-methylthiazol-5(2H)-ylidene]ethyl phosphate + 2 H2O + H(+). The protein operates within cofactor biosynthesis; thiamine diphosphate biosynthesis. Functionally, catalyzes the rearrangement of 1-deoxy-D-xylulose 5-phosphate (DXP) to produce the thiazole phosphate moiety of thiamine. Sulfur is provided by the thiocarboxylate moiety of the carrier protein ThiS. In vitro, sulfur can be provided by H(2)S. The polypeptide is Thiazole synthase (Cupriavidus metallidurans (strain ATCC 43123 / DSM 2839 / NBRC 102507 / CH34) (Ralstonia metallidurans)).